The primary structure comprises 559 residues: Putative helicase 22 (559 aa).

The Helicase ATP-binding domain occupies V186–S347. ATP is bound at residue A199–S206. Residues D300–H303 carry the DEAH box motif. One can recognise a Helicase C-terminal domain in the interval T410–N552.

This Sulfolobus islandicus filamentous virus (isolate Iceland/Hveragerdi) (SIFV) protein is Putative helicase 22 (SIFV0022).